We begin with the raw amino-acid sequence, 184 residues long: Outer-membrane lipoprotein carrier protein (184 aa).

An N-terminal signal peptide occupies residues 1-19; it reads MRAFLKILMVLIFMSVAYA.

Belongs to the LolA family. Monomer.

Its subcellular location is the periplasm. Functionally, participates in the translocation of lipoproteins from the inner membrane to the outer membrane. Only forms a complex with a lipoprotein if the residue after the N-terminal Cys is not an aspartate (The Asp acts as a targeting signal to indicate that the lipoprotein should stay in the inner membrane). This is Outer-membrane lipoprotein carrier protein from Helicobacter pylori (strain HPAG1).